Consider the following 200-residue polypeptide: MTDVALIDAGGANLGSVRYALERLGVDARVVRDAAGLHGAQRVILPGVGAAPEAMSRLRTQGLVEPLRALQVPLIGICLGMQLLFEHSEEGDVECLGLLPGIVRHMTPALGIRVPHMGWNQLVPMRESALLAGLPERASAYFVHGYAAPVTADTVAACDHGGLFTAVVQNGLRCGAQFHPERSADTGARILRNFLEMSFP.

The Glutamine amidotransferase type-1 domain maps to Asp-3–Pro-200. Cys-78 serves as the catalytic Nucleophile. Catalysis depends on residues His-179 and Glu-181.

Heterodimer of HisH and HisF.

Its subcellular location is the cytoplasm. It catalyses the reaction 5-[(5-phospho-1-deoxy-D-ribulos-1-ylimino)methylamino]-1-(5-phospho-beta-D-ribosyl)imidazole-4-carboxamide + L-glutamine = D-erythro-1-(imidazol-4-yl)glycerol 3-phosphate + 5-amino-1-(5-phospho-beta-D-ribosyl)imidazole-4-carboxamide + L-glutamate + H(+). The catalysed reaction is L-glutamine + H2O = L-glutamate + NH4(+). It participates in amino-acid biosynthesis; L-histidine biosynthesis; L-histidine from 5-phospho-alpha-D-ribose 1-diphosphate: step 5/9. Functionally, IGPS catalyzes the conversion of PRFAR and glutamine to IGP, AICAR and glutamate. The HisH subunit catalyzes the hydrolysis of glutamine to glutamate and ammonia as part of the synthesis of IGP and AICAR. The resulting ammonia molecule is channeled to the active site of HisF. The sequence is that of Imidazole glycerol phosphate synthase subunit HisH from Xanthomonas euvesicatoria pv. vesicatoria (strain 85-10) (Xanthomonas campestris pv. vesicatoria).